The primary structure comprises 264 residues: 1H-3-hydroxy-4-oxoquinoline 2,4-dioxygenase (264 aa).

Residues 30–32 (WCQ), 94–95 (TS), and Trp153 each bind substrate. His244 functions as the Proton donor/acceptor in the catalytic mechanism.

The protein belongs to the AB hydrolase superfamily. None. Contrary to most other dioxygenases, this enzyme does not require a cofactor for catalysis. is required as a cofactor.

It catalyses the reaction 3-hydroxy-1H-quinolin-4-one + O2 = N-formylanthranilate + CO + H(+). Ring-cleaving dioxygenase involved in oxoquinoline degradation and utilization. This Pseudomonas putida (Arthrobacter siderocapsulatus) protein is 1H-3-hydroxy-4-oxoquinoline 2,4-dioxygenase (qdo).